A 57-amino-acid chain; its full sequence is COP9 signalosome complex subunit 9 (57 aa).

This sequence belongs to the CSN9 family. In terms of assembly, component of the CSN complex, probably composed of cops1, cops2, cops3, cops4, cops5, cops6, cops7, cops8 and cops9.

It is found in the nucleus. Its subcellular location is the cytoplasm. It localises to the nucleoplasm. Component of the COP9 signalosome complex (CSN), a complex involved in various cellular and developmental processes. The CSN complex is an essential regulator of the ubiquitin (Ubl) conjugation pathway by mediating the deneddylation of the cullin subunits of SCF-type E3 ligase complexes, leading to decrease the Ubl ligase activity. May play a role in cell proliferation. The chain is COP9 signalosome complex subunit 9 from Danio rerio (Zebrafish).